A 192-amino-acid chain; its full sequence is MELLGQKVKEDGVVIDEKILKVDGFLNHQIDAKLMNEVGRTFYEQFKDKGITKILTIEASGIAPAIMAALHFDVPCLFAKKAKPSTLTDGYYETSIHSFTKNKTSTVIVSKEFLSEEDTVLIIDDFLANGDASLGLYDITQQANAKTAGIGIVVEKSFQNGHQRLEEAGLTVSSLCKVASLEGNKVTLVGEE.

2 residues coordinate xanthine: leucine 20 and asparagine 27. 128 to 132 (ANGDA) provides a ligand contact to 5-phospho-alpha-D-ribose 1-diphosphate. Residue lysine 156 coordinates xanthine.

The protein belongs to the purine/pyrimidine phosphoribosyltransferase family. Xpt subfamily. In terms of assembly, homodimer.

It is found in the cytoplasm. It catalyses the reaction XMP + diphosphate = xanthine + 5-phospho-alpha-D-ribose 1-diphosphate. Its pathway is purine metabolism; XMP biosynthesis via salvage pathway; XMP from xanthine: step 1/1. In terms of biological role, converts the preformed base xanthine, a product of nucleic acid breakdown, to xanthosine 5'-monophosphate (XMP), so it can be reused for RNA or DNA synthesis. The protein is Xanthine phosphoribosyltransferase of Staphylococcus aureus (strain bovine RF122 / ET3-1).